Consider the following 319-residue polypeptide: Dehydrogenase/reductase SDR family member 9 (319 aa).

The first 17 residues, 1–17 (MLFWLLVLLILCGFLWN), serve as a signal peptide directing secretion. NAD(+) is bound by residues 34 to 58 (ITGC…HVIA) and Asp83. Position 164 (Ser164) interacts with substrate. Tyr176 functions as the Proton acceptor in the catalytic mechanism. NAD(+) is bound at residue Lys180.

This sequence belongs to the short-chain dehydrogenases/reductases (SDR) family. As to quaternary structure, homotetramer.

It localises to the microsome membrane. Its subcellular location is the endoplasmic reticulum membrane. The catalysed reaction is 3beta-hydroxy-5alpha-pregnane-20-one + NAD(+) = 5alpha-pregnane-3,20-dione + NADH + H(+). It carries out the reaction 17beta-hydroxy-5alpha-androstan-3-one + NAD(+) = 5alpha-androstan-3,17-dione + NADH + H(+). It catalyses the reaction androsterone + NAD(+) = 5alpha-androstan-3,17-dione + NADH + H(+). The enzyme catalyses 5alpha-androstane-3alpha,17beta-diol + NAD(+) = 17beta-hydroxy-5alpha-androstan-3-one + NADH + H(+). The catalysed reaction is all-trans-retinol + NAD(+) = all-trans-retinal + NADH + H(+). It carries out the reaction 3alpha-hydroxy-5alpha-pregnan-20-one + NAD(+) = 5alpha-pregnane-3,20-dione + NADH + H(+). Functionally, 3-alpha-hydroxysteroid dehydrogenase that converts 3-alpha-tetrahydroprogesterone (allopregnanolone) to dihydroxyprogesterone and 3-alpha-androstanediol to dihydroxyprogesterone. Also plays a role in the biosynthesis of retinoic acid from retinaldehyde. Can utilize both NADH and NADPH. The sequence is that of Dehydrogenase/reductase SDR family member 9 (DHRS9) from Bos taurus (Bovine).